The primary structure comprises 271 residues: Eukaryotic translation initiation factor 3 subunit G (271 aa).

Disordered stretches follow at residues 1-29 and 143-185; these read MPALDDIKSSWADEVESDSGSLPPPSEVI and KPTK…MRGR. The 79-residue stretch at 189-267 folds into the RRM domain; it reads SAIRISNLSE…LILSVEWSKP (79 aa).

The protein belongs to the eIF-3 subunit G family. Component of the eukaryotic translation initiation factor 3 (eIF-3) complex.

The protein localises to the cytoplasm. Its function is as follows. RNA-binding component of the eukaryotic translation initiation factor 3 (eIF-3) complex, which is involved in protein synthesis of a specialized repertoire of mRNAs and, together with other initiation factors, stimulates binding of mRNA and methionyl-tRNAi to the 40S ribosome. The eIF-3 complex specifically targets and initiates translation of a subset of mRNAs involved in cell proliferation. This subunit can bind 18S rRNA. The chain is Eukaryotic translation initiation factor 3 subunit G from Anopheles gambiae (African malaria mosquito).